The chain runs to 59 residues: Large ribosomal subunit protein uL30 (59 aa).

This sequence belongs to the universal ribosomal protein uL30 family. In terms of assembly, part of the 50S ribosomal subunit.

This is Large ribosomal subunit protein uL30 from Staphylococcus epidermidis (strain ATCC 12228 / FDA PCI 1200).